The sequence spans 184 residues: ATP synthase subunit b, chloroplastic (184 aa).

Residues 27-49 (LATNLINLSVVLGVLIFFGKGVL) traverse the membrane as a helical segment.

The protein belongs to the ATPase B chain family. F-type ATPases have 2 components, F(1) - the catalytic core - and F(0) - the membrane proton channel. F(1) has five subunits: alpha(3), beta(3), gamma(1), delta(1), epsilon(1). F(0) has four main subunits: a(1), b(1), b'(1) and c(10-14). The alpha and beta chains form an alternating ring which encloses part of the gamma chain. F(1) is attached to F(0) by a central stalk formed by the gamma and epsilon chains, while a peripheral stalk is formed by the delta, b and b' chains.

Its subcellular location is the plastid. The protein localises to the chloroplast thylakoid membrane. In terms of biological role, f(1)F(0) ATP synthase produces ATP from ADP in the presence of a proton or sodium gradient. F-type ATPases consist of two structural domains, F(1) containing the extramembraneous catalytic core and F(0) containing the membrane proton channel, linked together by a central stalk and a peripheral stalk. During catalysis, ATP synthesis in the catalytic domain of F(1) is coupled via a rotary mechanism of the central stalk subunits to proton translocation. Component of the F(0) channel, it forms part of the peripheral stalk, linking F(1) to F(0). The chain is ATP synthase subunit b, chloroplastic from Nicotiana tabacum (Common tobacco).